Here is a 225-residue protein sequence, read N- to C-terminus: Heptaprenylglyceryl phosphate synthase (225 aa).

K6 contributes to the sn-glycerol 1-phosphate binding site. Positions 8 and 34 each coordinate Mg(2+). Residues 153 to 158 (YVEYSG), G183, and 203 to 204 (GN) contribute to the sn-glycerol 1-phosphate site.

The protein belongs to the GGGP/HepGP synthase family. Group I subfamily. As to quaternary structure, homodimer. Mg(2+) serves as cofactor.

The catalysed reaction is sn-glycerol 1-phosphate + all-trans-heptaprenyl diphosphate = 3-heptaprenyl-sn-glycero-1-phosphate + diphosphate. It functions in the pathway membrane lipid metabolism; glycerophospholipid metabolism. Prenyltransferase that catalyzes in vivo the transfer of the heptaprenyl moiety of heptaprenyl pyrophosphate (HepPP; 35 carbon atoms) to the C3 hydroxyl of sn-glycerol-1-phosphate (G1P), producing heptaprenylglyceryl phosphate (HepGP). This reaction is an ether-bond-formation step in the biosynthesis of archaea-type G1P-based membrane lipids found in Bacillales. This Listeria monocytogenes serotype 4b (strain F2365) protein is Heptaprenylglyceryl phosphate synthase.